A 59-amino-acid chain; its full sequence is Embryonic testis differentiation protein (59 aa).

Residues 1–28 (MDEKNPEAVPRPPEQNTELVPPKKSKSK) are disordered.

In terms of tissue distribution, specifically expressed in testis.

The polypeptide is Embryonic testis differentiation protein (Mus musculus (Mouse)).